Here is a 227-residue protein sequence, read N- to C-terminus: Orotidine 5'-phosphate decarboxylase (227 aa).

Substrate-binding positions include Asp-8, Lys-30, 59–68, Thr-118, Arg-178, Gln-187, Gly-207, and Arg-208; that span reads DLKLYDIPNT. The active-site Proton donor is Lys-61.

This sequence belongs to the OMP decarboxylase family. Type 1 subfamily. In terms of assembly, homodimer.

The enzyme catalyses orotidine 5'-phosphate + H(+) = UMP + CO2. Its pathway is pyrimidine metabolism; UMP biosynthesis via de novo pathway; UMP from orotate: step 2/2. Catalyzes the decarboxylation of orotidine 5'-monophosphate (OMP) to uridine 5'-monophosphate (UMP). The protein is Orotidine 5'-phosphate decarboxylase of Nitratiruptor sp. (strain SB155-2).